Consider the following 424-residue polypeptide: Serine--tRNA ligase (424 aa).

Residue 229-231 (TAE) coordinates L-serine. 260-262 (RSE) lines the ATP pocket. An L-serine-binding site is contributed by Glu283. 347–350 (EISS) lines the ATP pocket. Ser383 contributes to the L-serine binding site.

Belongs to the class-II aminoacyl-tRNA synthetase family. Type-1 seryl-tRNA synthetase subfamily. In terms of assembly, homodimer. The tRNA molecule binds across the dimer.

The protein resides in the cytoplasm. It catalyses the reaction tRNA(Ser) + L-serine + ATP = L-seryl-tRNA(Ser) + AMP + diphosphate + H(+). It carries out the reaction tRNA(Sec) + L-serine + ATP = L-seryl-tRNA(Sec) + AMP + diphosphate + H(+). Its pathway is aminoacyl-tRNA biosynthesis; selenocysteinyl-tRNA(Sec) biosynthesis; L-seryl-tRNA(Sec) from L-serine and tRNA(Sec): step 1/1. In terms of biological role, catalyzes the attachment of serine to tRNA(Ser). Is also able to aminoacylate tRNA(Sec) with serine, to form the misacylated tRNA L-seryl-tRNA(Sec), which will be further converted into selenocysteinyl-tRNA(Sec). This chain is Serine--tRNA ligase, found in Gluconacetobacter diazotrophicus (strain ATCC 49037 / DSM 5601 / CCUG 37298 / CIP 103539 / LMG 7603 / PAl5).